The following is a 214-amino-acid chain: Neurogenin-3 (214 aa).

A compositionally biased stretch (polar residues) spans 1–14; sequence MTPQPSGAPTVQVT. Positions 1–98 are disordered; the sequence is MTPQPSGAPT…NDRERNRMHN (98 aa). Basic and acidic residues predominate over residues 15 to 26; the sequence is RETERSFPRASE. Basic residues-rich tracts occupy residues 57–70 and 79–88; these read APRK…GRSR and KQRRSRRKKA. The bHLH domain occupies 83 to 135; that stretch reads SRRKKANDRERNRMHNLNSALDALRGVLPTFPDDAKLTKIETLRFAHNYIWAL.

In terms of assembly, efficient DNA binding requires dimerization with another bHLH protein. Interacts with ATOH8.

Its subcellular location is the nucleus. Its function is as follows. Acts as a transcriptional regulator. Together with NKX2-2, initiates transcriptional activation of NEUROD1. Involved in neurogenesis. Also required for the specification of a common precursor of the 4 pancreatic endocrine cell types. In Homo sapiens (Human), this protein is Neurogenin-3 (NEUROG3).